The following is a 325-amino-acid chain: Post-GPI attachment to proteins factor 2-like (325 aa).

The next 6 membrane-spanning stretches (helical) occupy residues 80 to 100 (VVTA…AYVF), 130 to 150 (YFWR…AFVY), 171 to 191 (LLIT…GGVT), 205 to 225 (IFIT…KLNG), 243 to 263 (WKKI…VFFA), and 276 to 296 (WFAF…FTII).

The protein belongs to the PGAP2 family.

It is found in the membrane. This Drosophila melanogaster (Fruit fly) protein is Post-GPI attachment to proteins factor 2-like.